Here is a 322-residue protein sequence, read N- to C-terminus: MKQSKLGVLMVNLGTPDAPTPQAVKRYLAEFLSDRRVVDTSPWLWWPLLRGVILPIRSPRVAKLYQSVWMDEGSPLLVYSRRQQKALAERMPEIPVELGMSYGSPNLPDAIDKLLAQGVTKLVVLPLYPQYSCSTSAAVWDAVARILQGYRRLPSISFIRDYAEHPAYISALKQSVEHSFVQHGKPDRLVLSFHGIPKRYAQLGDDYPQRCEDTSRALRAEIALPAEQIMMTYQSRFGREPWLTPYTDETLKSLPSQGVKHIQLICPGFSADCLETLEEIKEQNREIFLHAGGEKFEYIPALNDDKGHIDLLEQLVRDHLSC.

Positions 194 and 275 each coordinate Fe cation.

Belongs to the ferrochelatase family.

Its subcellular location is the cytoplasm. It carries out the reaction heme b + 2 H(+) = protoporphyrin IX + Fe(2+). The protein operates within porphyrin-containing compound metabolism; protoheme biosynthesis; protoheme from protoporphyrin-IX: step 1/1. Its function is as follows. Catalyzes the ferrous insertion into protoporphyrin IX. In Yersinia enterocolitica serotype O:8 / biotype 1B (strain NCTC 13174 / 8081), this protein is Ferrochelatase.